Reading from the N-terminus, the 212-residue chain is Thymidylate kinase (212 aa).

10–17 provides a ligand contact to ATP; the sequence is GIDGCGKT.

Belongs to the thymidylate kinase family.

The catalysed reaction is dTMP + ATP = dTDP + ADP. Functionally, phosphorylation of dTMP to form dTDP in both de novo and salvage pathways of dTTP synthesis. This Synechococcus sp. (strain RCC307) protein is Thymidylate kinase.